A 366-amino-acid polypeptide reads, in one-letter code: GDSL esterase/lipase LTL1 (366 aa).

Residues 1–27 (MNINCSPLGFLISLFFIVTFLAPQVKS) form the signal peptide. The active-site Nucleophile is serine 36. An N-linked (GlcNAc...) asparagine glycan is attached at asparagine 117. Residues aspartate 326 and histidine 329 contribute to the active site. N-linked (GlcNAc...) asparagine glycosylation occurs at asparagine 354.

It belongs to the 'GDSL' lipolytic enzyme family. Binds to VLG at the endomembrane system. As to expression, mostly expressed in flowers, reproductive stems and rosette leaves, and, to a lower extent, in roots.

The protein localises to the secreted. Functionally, involved in the mechanisms of salt tolerance. Mediates resistance to LiCl and NaCl. This is GDSL esterase/lipase LTL1 from Arabidopsis thaliana (Mouse-ear cress).